A 317-amino-acid polypeptide reads, in one-letter code: Transcription factor EC (317 aa).

The interval 1–90 (MTFDCRVCDQ…GLTDAPCPSI (90 aa)) is necessary for transcriptional transactivation. The bHLH domain occupies 110–163 (QKKDNHNLIERRRRYNINYRIKELGTLIPKSNDPDMRWNKGTILKASVDYIKWL). The tract at residues 242–317 (TSPEFYEQAV…SLSSEDGDEL (76 aa)) is necessary for transcriptional transactivation.

Belongs to the MiT/TFE family. In terms of assembly, homodimer. Forms heterodimers with MITF. Interacts with MITF. Forms heterodimers with TFE3. Expressed in osteoclast-like cells (at protein level). Expressed in cells of the mononuclear phagocyte lineage. Expressed in macrophages and in osteoclast-like cells.

Its subcellular location is the nucleus. In terms of biological role, transcriptional regulator that acts as a repressor or an activator. Acts as a transcriptional transactivator on the proximal promoter region of the tartrate-resistant acid phosphatase (TRAP) E-box containing promoter. Collaborates with MITF in target gene activation. Acts as a transcriptional repressor on minimal promoter containing element F (that includes an E-box sequence). Binds to element F in an E-box sequence-specific manner. Acts as a transcriptional repressor on minimal promoter containing mu E3 enhancer sequence. Binds to mu E3 DNA sequence of the immunoglobulin heavy-chain gene enhancer. Binds DNA in a homo- or heterodimeric form. The protein is Transcription factor EC (Tfec) of Mus musculus (Mouse).